The primary structure comprises 226 residues: 7-cyano-7-deazaguanine synthase (226 aa).

10–20 (LSGGLDSATAA) lines the ATP pocket. Zn(2+) is bound by residues cysteine 191, cysteine 199, cysteine 202, and cysteine 205.

This sequence belongs to the QueC family. Zn(2+) serves as cofactor.

It catalyses the reaction 7-carboxy-7-deazaguanine + NH4(+) + ATP = 7-cyano-7-deazaguanine + ADP + phosphate + H2O + H(+). It functions in the pathway purine metabolism; 7-cyano-7-deazaguanine biosynthesis. Functionally, catalyzes the ATP-dependent conversion of 7-carboxy-7-deazaguanine (CDG) to 7-cyano-7-deazaguanine (preQ(0)). This is 7-cyano-7-deazaguanine synthase from Synechococcus sp. (strain CC9311).